The chain runs to 608 residues: N(6)-adenosine-methyltransferase MT-A70-like protein (608 aa).

Residues 250–265 (KKKQERRDEKELRPDV) show a composition bias toward basic and acidic residues. The tract at residues 250–272 (KKKQERRDEKELRPDVDAGENVT) is disordered. S-adenosyl-L-methionine is bound by residues 395–396 (DL) and D413. The tract at residues 414–428 (PPWDIHMELPYGTMS) is gate loop 1. Residues 480-497 (QLQRIIRTGRTGHWLNHG) are interphase loop. A positively charged region required for RNA-binding region spans residues 483–496 (RIIRTGRTGHWLNH). The interval 525–533 (VRATSHKPD) is gate loop 2. Residues K531, 554–557 (RPHN), and 567–568 (NQ) each bind S-adenosyl-L-methionine.

Belongs to the MT-A70-like family. In terms of assembly, component of the WMM complex, a N6-methyltransferase complex composed of a catalytic subcomplex, named MAC, and of an associated subcomplex, named MACOM. The MAC subcomplex is composed of Ime4/Mettl3 and Mettl14. The MACOM subcomplex is composed of fl(2)d, Flacc/Xio, Hakai, vir, and, in some cases of nito. In terms of tissue distribution, expressed in testes. In the ovaries, detected in germaria, prefollicle, follicle and polar cells (at protein levels). Detected in the ooplasm and in the cells of the 16-cell cyst of early stages (at protein levels).

It is found in the nucleus. It catalyses the reaction an adenosine in mRNA + S-adenosyl-L-methionine = an N(6)-methyladenosine in mRNA + S-adenosyl-L-homocysteine + H(+). Functionally, catalytic component of the WMM complex, a complex that mediates N6-methyladenosine (m6A) methylation of mRNAs, a modification that plays a role in the efficiency of mRNA splicing and is required for sex determination. In the heterodimer formed with Mettl14, constitutes the catalytic core. Required for sex determination and dosage compensation via Sxl alternative splicing: m6A methylation acts as a key regulator of Sxl pre-mRNA and promotes female-specific alternative splicing of Sxl, which determines female physiognomy. M6A methylation is also required for neuronal functions. During oogenesis, required for egg chamber development probably as part of the N/Notch signaling. This Drosophila melanogaster (Fruit fly) protein is N(6)-adenosine-methyltransferase MT-A70-like protein.